The following is a 309-amino-acid chain: Taste receptor type 2 member 8 (309 aa).

At 1–7 the chain is on the extracellular side; the sequence is MFSPADN. Residues 8-28 traverse the membrane as a helical segment; the sequence is IFIILITGEFILGILGNGYIA. The Cytoplasmic segment spans residues 29–50; sequence LVNWIDWIKKKKISTVDYILTN. The chain crosses the membrane as a helical span at residues 51 to 71; the sequence is LVIARICLISVMVVNGIVIVL. The Extracellular portion of the chain corresponds to 72–82; it reads NPDVYTKNKQQ. The chain crosses the membrane as a helical span at residues 83–103; that stretch reads IVIFTFWTFANYLNMWITTCL. At 104–131 the chain is on the cytoplasmic side; that stretch reads NVFYFLKIASSSHPLFLWLKWKIDMVVH. The helical transmembrane segment at 132 to 152 threads the bilayer; it reads WILLGCFAISLLVSLIAAIVL. The Extracellular portion of the chain corresponds to 153–184; sequence SCDYRFHAIAKHKRNITEMFXVSKIPYFEPLT. N-linked (GlcNAc...) asparagine glycosylation is present at Asn167. Residues 185–205 form a helical membrane-spanning segment; sequence LFNLFAIVPFIVSLISFFLLV. The Cytoplasmic portion of the chain corresponds to 206-239; the sequence is RSLWRHTKQIKLYATGSRDPSTEVHVRAIKTMTS. A helical membrane pass occupies residues 240 to 260; that stretch reads FIFFFFLYFISSILMTFSYLM. Residues 261-266 lie on the Extracellular side of the membrane; the sequence is TKYKLA. Residues 267-287 form a helical membrane-spanning segment; sequence VEFGEIAAILYPLGHSLILIV. At 288-309 the chain is on the cytoplasmic side; sequence LNNKLRQIFVRMLTCRKIACVI.

This sequence belongs to the G-protein coupled receptor T2R family.

It localises to the membrane. Functionally, receptor that may play a role in the perception of bitterness and is gustducin-linked. May play a role in sensing the chemical composition of the gastrointestinal content. The activity of this receptor may stimulate alpha gustducin, mediate PLC-beta-2 activation and lead to the gating of TRPM5. This Pan troglodytes (Chimpanzee) protein is Taste receptor type 2 member 8 (TAS2R8).